Consider the following 224-residue polypeptide: UPF0758 protein VP0184 (224 aa).

The MPN domain maps to 102 to 224 (ALTSPEQTKL…SVSFAERGWI (123 aa)). His173, His175, and Asp186 together coordinate Zn(2+). Residues 173 to 186 (HNHPSGVAEPSQAD) carry the JAMM motif motif.

Belongs to the UPF0758 family.

This Vibrio parahaemolyticus serotype O3:K6 (strain RIMD 2210633) protein is UPF0758 protein VP0184.